A 167-amino-acid polypeptide reads, in one-letter code: Ribosome maturation factor RimM (167 aa).

A PRC barrel domain is found at 94–165 (ENEFYYSDII…KIIITPMEGL (72 aa)).

It belongs to the RimM family. As to quaternary structure, binds ribosomal protein uS19.

The protein resides in the cytoplasm. Its function is as follows. An accessory protein needed during the final step in the assembly of 30S ribosomal subunit, possibly for assembly of the head region. Essential for efficient processing of 16S rRNA. May be needed both before and after RbfA during the maturation of 16S rRNA. It has affinity for free ribosomal 30S subunits but not for 70S ribosomes. The sequence is that of Ribosome maturation factor RimM from Staphylococcus aureus (strain Mu3 / ATCC 700698).